The following is a 99-amino-acid chain: Large ribosomal subunit protein uL23 (99 aa).

The protein belongs to the universal ribosomal protein uL23 family. As to quaternary structure, part of the 50S ribosomal subunit. Contacts protein L29, and trigger factor when it is bound to the ribosome.

Its function is as follows. One of the early assembly proteins it binds 23S rRNA. One of the proteins that surrounds the polypeptide exit tunnel on the outside of the ribosome. Forms the main docking site for trigger factor binding to the ribosome. This is Large ribosomal subunit protein uL23 from Xanthomonas axonopodis pv. citri (strain 306).